Here is a 586-residue protein sequence, read N- to C-terminus: CTP synthase (586 aa).

Positions 1–265 (MVRFIFVTGG…ENKVLNFFNI (265 aa)) are amidoligase domain. Ser13 contributes to the CTP binding site. Ser13 provides a ligand contact to UTP. ATP is bound by residues 14–19 (SLGKGI) and Asp71. Mg(2+)-binding residues include Asp71 and Glu139. Residues 146–148 (DIE), 186–191 (KTKPTQ), and Lys222 each bind CTP. UTP-binding positions include 186–191 (KTKPTQ) and Lys222. Residues 290-582 (KIAIITKYHK…IKATIEYNKS (293 aa)) enclose the Glutamine amidotransferase type-1 domain. Position 352 (Gly352) interacts with L-glutamine. Cys379 (nucleophile; for glutamine hydrolysis) is an active-site residue. Residues 380–383 (FGMQ) and Glu403 contribute to the L-glutamine site. The 45-residue stretch at 429 to 473 (AHISKCTYSEAFECDASTVYTNIHEDSNNLSTDKLQIETNFRNMS) folds into the RPE1 insert domain. Arg510 lines the L-glutamine pocket. Catalysis depends on residues His555 and Glu557.

The protein belongs to the CTP synthase family. In terms of assembly, homotetramer.

It catalyses the reaction UTP + L-glutamine + ATP + H2O = CTP + L-glutamate + ADP + phosphate + 2 H(+). It carries out the reaction L-glutamine + H2O = L-glutamate + NH4(+). The catalysed reaction is UTP + NH4(+) + ATP = CTP + ADP + phosphate + 2 H(+). It participates in pyrimidine metabolism; CTP biosynthesis via de novo pathway; CTP from UDP: step 2/2. Allosterically activated by GTP, when glutamine is the substrate; GTP has no effect on the reaction when ammonia is the substrate. The allosteric effector GTP functions by stabilizing the protein conformation that binds the tetrahedral intermediate(s) formed during glutamine hydrolysis. Inhibited by the product CTP, via allosteric rather than competitive inhibition. Catalyzes the ATP-dependent amination of UTP to CTP with either L-glutamine or ammonia as the source of nitrogen. Regulates intracellular CTP levels through interactions with the four ribonucleotide triphosphates. The polypeptide is CTP synthase (Rickettsia prowazekii (strain Madrid E)).